A 665-amino-acid chain; its full sequence is Ion-translocating oxidoreductase complex subunit C (665 aa).

2 consecutive 4Fe-4S ferredoxin-type domains span residues 368–398 (EYAE…QQLY) and 408–437 (KSEE…IQYF). Residues Cys-378, Cys-381, Cys-384, Cys-388, Cys-417, Cys-420, Cys-423, and Cys-427 each contribute to the [4Fe-4S] cluster site. Basic and acidic residues-rich tracts occupy residues 465–477 (QARM…ERKA) and 485–513 (ARRE…KANE). Disordered stretches follow at residues 465-568 (QARM…DAKK), 580-623 (AKKL…LDPK), and 637-665 (KKLA…QIVR). Polar residues-rich tracts occupy residues 554–564 (VENQEQQTQPT) and 585–600 (QTNS…QTAE). Residues 602 to 615 (EVEKTKSAVEKTEE) show a composition bias toward basic and acidic residues. Residues 643 to 656 (NSTSEAISNSQTAE) are compositionally biased toward polar residues.

It belongs to the 4Fe4S bacterial-type ferredoxin family. RnfC subfamily. As to quaternary structure, the complex is composed of six subunits: RnfA, RnfB, RnfC, RnfD, RnfE and RnfG. Requires [4Fe-4S] cluster as cofactor.

It localises to the cell inner membrane. Functionally, part of a membrane-bound complex that couples electron transfer with translocation of ions across the membrane. This Haemophilus influenzae (strain 86-028NP) protein is Ion-translocating oxidoreductase complex subunit C.